Reading from the N-terminus, the 887-residue chain is Translation initiation factor IF-2 (887 aa).

Disordered stretches follow at residues 31–87 (KLAQ…PRRI), 94–113 (SFVS…DSDA), and 129–285 (VETE…KWRK). A compositionally biased stretch (basic and acidic residues) spans 42 to 59 (SSSEKPSTKVPEKIAKEK). Composition is skewed to basic and acidic residues over residues 150-171 (VVAK…KEPP) and 199-212 (PKKE…EKTK). A compositionally biased stretch (low complexity) spans 213 to 223 (TTQTKPQQSSD). Positions 241-273 (YRRDVSKKSGSDFRDRAKKDDNPKAFTGRDRYG) are enriched in basic and acidic residues. A tr-type G domain is found at 393-562 (TRPPIVAFMG…ALQAEVLELK (170 aa)). Residues 402–409 (GHVDHGKT) form a G1 region. 402 to 409 (GHVDHGKT) provides a ligand contact to GTP. Residues 427-431 (AITQH) form a G2 region. The interval 448-451 (DTPG) is G3. Residues 448–452 (DTPGH) and 502–505 (NKCD) each bind GTP. Residues 502-505 (NKCD) form a G4 region. The interval 538–540 (SAK) is G5.

It belongs to the TRAFAC class translation factor GTPase superfamily. Classic translation factor GTPase family. IF-2 subfamily.

It is found in the cytoplasm. Functionally, one of the essential components for the initiation of protein synthesis. Protects formylmethionyl-tRNA from spontaneous hydrolysis and promotes its binding to the 30S ribosomal subunits. Also involved in the hydrolysis of GTP during the formation of the 70S ribosomal complex. In Chlamydia caviae (strain ATCC VR-813 / DSM 19441 / 03DC25 / GPIC) (Chlamydophila caviae), this protein is Translation initiation factor IF-2.